Consider the following 453-residue polypeptide: MTLPVVAIVGRPNVGKSTLVNRLTGERVAIVHDQPGVTRDRTYRPSFWQDRDFLVVDTGGLVFADDTEFLPLIRQQVVTALSEARVAILVVDGQQGITAADEEIAQWLRQQSLPVLVAVNKCESPQQGLAQGAEFWELGLGEPFPISAIHGNGTGELLDQVVSYLPPTDQQAGEEDIINVAIVGRPNVGKSSLLNAVVGEQRAIVSPISGTTRDAIDTLVERDGQRYRLIDTAGIRKQKNVDYGPEFFGINRAFKAIQRAEVVLLVLDALDGVTEQDQKLAGRIVDEGCACVIVVNKWDAVEKDSYTIYDYQHQVEQRLNFIGWSDHIFISAATGQRVEKIFERVHLAAEQHRRRVSTSVINEVLEDAVGWHSPPASRQGRQGKIYYGTQVSSQPPTIALFVNDPALFKDNYRKYIEGQFRKQLGFRGTPIRLLWRGKKVREAERKGVLVRDR.

2 consecutive EngA-type G domains span residues 4–169 (PVVA…PPTD) and 178–353 (INVA…EQHR). Residues 10-17 (GRPNVGKS), 57-61 (DTGGL), 120-123 (NKCE), 184-191 (GRPNVGKS), 231-235 (DTAGI), and 296-299 (NKWD) contribute to the GTP site. The KH-like domain maps to 354–439 (RRVSTSVINE…PIRLLWRGKK (86 aa)).

It belongs to the TRAFAC class TrmE-Era-EngA-EngB-Septin-like GTPase superfamily. EngA (Der) GTPase family. Associates with the 50S ribosomal subunit.

GTPase that plays an essential role in the late steps of ribosome biogenesis. This Cyanothece sp. (strain PCC 7425 / ATCC 29141) protein is GTPase Der.